The chain runs to 189 residues: UPF0398 protein LGAS_1023 (189 aa).

This sequence belongs to the UPF0398 family.

The polypeptide is UPF0398 protein LGAS_1023 (Lactobacillus gasseri (strain ATCC 33323 / DSM 20243 / BCRC 14619 / CIP 102991 / JCM 1131 / KCTC 3163 / NCIMB 11718 / NCTC 13722 / AM63)).